The following is a 537-amino-acid chain: Exoglucanase 1 (537 aa).

The N-terminal stretch at 1 to 18 (MKGSISYQIYKGALLLSA) is a signal peptide. The catalytic stretch occupies residues 19–453 (LLNSVSAQQV…YVIYSNIKTG (435 aa)). Residue asparagine 136 is glycosylated (N-linked (GlcNAc...) asparagine). Glutamate 235 acts as the Nucleophile in catalysis. Catalysis depends on glutamate 240, which acts as the Proton donor. 2 N-linked (GlcNAc...) asparagine glycosylation sites follow: asparagine 414 and asparagine 456. A linker region spans residues 454–477 (PLNSTFTGGTTSSSSTTTTTSKST). A compositionally biased stretch (low complexity) spans 458–502 (TFTGGTTSSSSTTTTTSKSTSTSSSSKTTTTVTTTTTSSGSSGTG). A disordered region spans residues 458-503 (TFTGGTTSSSSTTTTTSKSTSTSSSSKTTTTVTTTTTSSGSSGTGA). The CBM1 domain maps to 501–537 (TGARDWAQCGGNGWTGPTTCVSPYTCTKQNDWYSQCL). 2 cysteine pairs are disulfide-bonded: cysteine 509–cysteine 526 and cysteine 520–cysteine 536.

It belongs to the glycosyl hydrolase 7 (cellulase C) family.

The protein localises to the secreted. The enzyme catalyses Hydrolysis of (1-&gt;4)-beta-D-glucosidic linkages in cellulose and cellotetraose, releasing cellobiose from the non-reducing ends of the chains.. The polypeptide is Exoglucanase 1 (cbh1) (Penicillium janthinellum (Penicillium vitale)).